Reading from the N-terminus, the 339-residue chain is Undifferentiated embryonic cell transcription factor 1 (339 aa).

Disordered regions lie at residues 1 to 62 and 144 to 270; these read MLLR…QRTP and MGLL…QVAP. A phosphoserine mark is found at Ser15, Ser18, Ser48, and Ser54. The segment covering 154–170 has biased composition (basic residues); the sequence is RVRRRSTGPGRPQRRGR. Low complexity-rich tracts occupy residues 171–193 and 218–229; these read SSLS…PLAA and TSSPPLTSTDTL. Polar residues predominate over residues 261-270; it reads GRASSPQVAP. The interval 279 to 310 is leucine-zipper; sequence QTLTHLGDISTVLGPLRDQLSTLNQHVEHLRG.

Binds to the N-terminal region of ATF2. Associates with the TFIID complex through interaction with TBP. Post-translationally, phosphorylated. As to expression, expressed mainly in pluripotent cells with expression rapidly down-regulated upon cell differentiation.

The protein localises to the nucleus. Acts as a transcriptional coactivator of ATF2. The sequence is that of Undifferentiated embryonic cell transcription factor 1 from Mus musculus (Mouse).